A 421-amino-acid polypeptide reads, in one-letter code: Early growth response protein 2 (421 aa).

Over residues 127–145 the composition is skewed to low complexity; that stretch reads CSSTSSSNASSGSPNLSCS. 3 disordered regions span residues 127–152, 179–200, and 223–288; these read CSSTSSSNASSGSPNLSCSMSHPQSD, SPTAASLPPPPSYPSPKGASDG, and SDRK…ERPY. Polar residues predominate over residues 236–247; sequence PLSTIRNFTLGG. 3 C2H2-type zinc fingers span residues 288–312, 318–340, and 346–368; these read YPCPAEGCDRRFSRSDELTRHIRIH, FQCRICMRNFSRSDHLTTHIRTH, and FACDYCGRKFARSDERKRHTKIH.

This sequence belongs to the EGR C2H2-type zinc-finger protein family.

The protein localises to the nucleus. Its function is as follows. Sequence-specific DNA-binding transcription factor. The chain is Early growth response protein 2 (egr2) from Xenopus laevis (African clawed frog).